The sequence spans 340 residues: 3-isopropylmalate dehydrogenase (340 aa).

The substrate site is built by Arg-88, Arg-98, Arg-122, and Asp-212. Mg(2+)-binding residues include Asp-212, Asp-236, and Asp-240. NAD(+) is bound at residue 272–284 (GSAPDIAGQGIAD).

This sequence belongs to the isocitrate and isopropylmalate dehydrogenases family. LeuB type 2 subfamily. As to quaternary structure, homodimer. The cofactor is Mg(2+). Requires Mn(2+) as cofactor.

It localises to the cytoplasm. It carries out the reaction (2R,3S)-3-isopropylmalate + NAD(+) = 4-methyl-2-oxopentanoate + CO2 + NADH. Its pathway is amino-acid biosynthesis; L-leucine biosynthesis; L-leucine from 3-methyl-2-oxobutanoate: step 3/4. Catalyzes the oxidation of 3-carboxy-2-hydroxy-4-methylpentanoate (3-isopropylmalate) to 3-carboxy-4-methyl-2-oxopentanoate. The product decarboxylates to 4-methyl-2 oxopentanoate. In Corynebacterium glutamicum (strain R), this protein is 3-isopropylmalate dehydrogenase.